A 412-amino-acid polypeptide reads, in one-letter code: Putative competence-damage inducible protein (412 aa).

Belongs to the CinA family.

This chain is Putative competence-damage inducible protein, found in Bacillus mycoides (strain KBAB4) (Bacillus weihenstephanensis).